The primary structure comprises 231 residues: ATP-dependent dethiobiotin synthetase BioD (231 aa).

13–18 (DVGKTV) contacts ATP. Thr17 lines the Mg(2+) pocket. Residue Lys38 is part of the active site. Residues Asp55, 116–119 (EGAG), and 176–177 (NR) each bind ATP. Mg(2+)-binding residues include Asp55 and Glu116.

It belongs to the dethiobiotin synthetase family. As to quaternary structure, homodimer. The cofactor is Mg(2+).

The protein localises to the cytoplasm. The enzyme catalyses (7R,8S)-7,8-diammoniononanoate + CO2 + ATP = (4R,5S)-dethiobiotin + ADP + phosphate + 3 H(+). The protein operates within cofactor biosynthesis; biotin biosynthesis; biotin from 7,8-diaminononanoate: step 1/2. In terms of biological role, catalyzes a mechanistically unusual reaction, the ATP-dependent insertion of CO2 between the N7 and N8 nitrogen atoms of 7,8-diaminopelargonic acid (DAPA, also called 7,8-diammoniononanoate) to form a ureido ring. The protein is ATP-dependent dethiobiotin synthetase BioD of Vibrio cholerae serotype O1 (strain ATCC 39315 / El Tor Inaba N16961).